Consider the following 303-residue polypeptide: Bifunctional protein FolD (303 aa).

NADP(+)-binding positions include 165–167, Ser190, and Ile231; that span reads GRS.

It belongs to the tetrahydrofolate dehydrogenase/cyclohydrolase family. In terms of assembly, homodimer.

The enzyme catalyses (6R)-5,10-methylene-5,6,7,8-tetrahydrofolate + NADP(+) = (6R)-5,10-methenyltetrahydrofolate + NADPH. The catalysed reaction is (6R)-5,10-methenyltetrahydrofolate + H2O = (6R)-10-formyltetrahydrofolate + H(+). The protein operates within one-carbon metabolism; tetrahydrofolate interconversion. Its function is as follows. Catalyzes the oxidation of 5,10-methylenetetrahydrofolate to 5,10-methenyltetrahydrofolate and then the hydrolysis of 5,10-methenyltetrahydrofolate to 10-formyltetrahydrofolate. This Prochlorococcus marinus (strain NATL2A) protein is Bifunctional protein FolD.